Reading from the N-terminus, the 1031-residue chain is Error-prone DNA polymerase (1031 aa).

It belongs to the DNA polymerase type-C family. DnaE2 subfamily.

The protein localises to the cytoplasm. The catalysed reaction is DNA(n) + a 2'-deoxyribonucleoside 5'-triphosphate = DNA(n+1) + diphosphate. In terms of biological role, DNA polymerase involved in damage-induced mutagenesis and translesion synthesis (TLS). It is not the major replicative DNA polymerase. This is Error-prone DNA polymerase from Pseudomonas syringae pv. tomato (strain ATCC BAA-871 / DC3000).